The chain runs to 249 residues: MNVLSCSINTLIKEGLYEISGVEVGQHFYWQIGGFQVHAQVLITSWVVIAILLGSAVLAVRNPQTIPTDGQNFFEFVLEFIRDVSQTQIGEEYGPWVPFIGTLFLFIFVSNWSGALLPWKIIQLPQGELAAPTNDINTTVALALLTSAAYFYAGLSKKGLGYFSKYIQPTPILLPINILEDFTKPLSLSFRLFGNILADELVVVVLVSLVPLVVPIPVMFLGLFTSGIQALIFATLAAAYIGESMEGHH.

5 helical membrane-spanning segments follow: residues 40–60, 97–117, 136–156, 201–221, and 222–242; these read QVLITSWVVIAILLGSAVLAV, VPFIGTLFLFIFVSNWSGALL, INTTVALALLTSAAYFYAGLS, LVVVVLVSLVPLVVPIPVMFL, and GLFTSGIQALIFATLAAAYIG.

This sequence belongs to the ATPase A chain family. F-type ATPases have 2 components, CF(1) - the catalytic core - and CF(0) - the membrane proton channel. CF(1) has five subunits: alpha(3), beta(3), gamma(1), delta(1), epsilon(1). CF(0) has four main subunits: a, b, b' and c.

The protein localises to the plastid. The protein resides in the chloroplast thylakoid membrane. Key component of the proton channel; it plays a direct role in the translocation of protons across the membrane. The protein is ATP synthase subunit a, chloroplastic of Arabis hirsuta (Hairy rock-cress).